A 113-amino-acid chain; its full sequence is Protein crumbs homolog 3 (113 aa).

The N-terminal stretch at Met-1 to Thr-24 is a signal peptide. The tract at residues Leu-23–Gly-44 is disordered. Topologically, residues Ala-25–Ala-49 are extracellular. An N-linked (GlcNAc...) asparagine glycan is attached at Asn-31. Residues Ile-50 to Phe-70 traverse the membrane as a helical segment. The Cytoplasmic segment spans residues Leu-71–Ile-113. Residues Arg-77 to Ile-113 are interaction with EPB41L5. Residues Arg-80–Ile-113 are disordered. The segment covering Glu-83–Glu-92 has biased composition (polar residues). The short motif at Glu-110–Ile-113 is the PDZ-binding element.

In terms of assembly, component of a complex composed of CRB3, PALS1 and PATJ. Interacts (via C-terminus) with PALS1 (via PDZ domain). Interacts with PARD6A. Interacts (via intracellular domain) with EPB41L5. Interacts with WDR83. Expressed in the apical renal tubules (at protein level). Expressed in the retinal pigment epithelium.

The protein localises to the apical cell membrane. The protein resides in the cell junction. It localises to the tight junction. Functionally, involved in the establishment of cell polarity in mammalian epithelial cells. Regulates the morphogenesis of tight junctions. Involved in promoting phosphorylation and cytoplasmic retention of transcriptional coactivators YAP1 and WWTR1/TAZ which leads to suppression of TGFB1-dependent transcription of target genes such as CCN2/CTGF, SERPINE1/PAI1, SNAI1/SNAIL1 and SMAD7. The chain is Protein crumbs homolog 3 (Crb3) from Mus musculus (Mouse).